The sequence spans 314 residues: Probable 5-dehydro-4-deoxyglucarate dehydratase (314 aa).

This sequence belongs to the DapA family.

It catalyses the reaction 5-dehydro-4-deoxy-D-glucarate + H(+) = 2,5-dioxopentanoate + CO2 + H2O. Its pathway is carbohydrate acid metabolism; D-glucarate degradation; 2,5-dioxopentanoate from D-glucarate: step 2/2. The sequence is that of Probable 5-dehydro-4-deoxyglucarate dehydratase from Bradyrhizobium sp. (strain ORS 278).